A 94-amino-acid chain; its full sequence is Large ribosomal subunit protein bL31 (94 aa).

The tract at residues Lys64 to Ser94 is disordered. Residues Asp73 to Ser94 are compositionally biased toward basic and acidic residues.

The protein belongs to the bacterial ribosomal protein bL31 family. Type A subfamily. As to quaternary structure, part of the 50S ribosomal subunit.

Its function is as follows. Binds the 23S rRNA. In Prochlorococcus marinus (strain SARG / CCMP1375 / SS120), this protein is Large ribosomal subunit protein bL31.